The following is a 180-amino-acid chain: Small ribosomal subunit protein uS4 (180 aa).

In terms of domain architecture, S4 RNA-binding spans Arg-104–Pro-166. A disordered region spans residues Phe-155–Asn-180.

This sequence belongs to the universal ribosomal protein uS4 family. Part of the 30S ribosomal subunit. Contacts protein S5. The interaction surface between S4 and S5 is involved in control of translational fidelity.

Its function is as follows. One of the primary rRNA binding proteins, it binds directly to 16S rRNA where it nucleates assembly of the body of the 30S subunit. With S5 and S12 plays an important role in translational accuracy. The polypeptide is Small ribosomal subunit protein uS4 (Metallosphaera sedula (strain ATCC 51363 / DSM 5348 / JCM 9185 / NBRC 15509 / TH2)).